Here is a 390-residue protein sequence, read N- to C-terminus: Isotocin receptor (390 aa).

The Extracellular segment spans residues 1-48 (MEEMFKEQDFWSFNESSRNSTVGNETFGGNQTVNPLKRNEEVAKVEVT). Asn14, Asn19, Asn24, and Asn30 each carry an N-linked (GlcNAc...) asparagine glycan. A helical transmembrane segment spans residues 49–69 (VLALVLFLALAGNLCVLIAIY). Topologically, residues 70 to 86 (TAKHTQSRMYYLMKHLS) are cytoplasmic. Residues 87-107 (IADLVVAVFQVLPQLIWDITF) form a helical membrane-spanning segment. Residues 108–124 (RFYGPDFLCRLVKYLQT) are Extracellular-facing. A disulfide bridge connects residues Cys116 and Cys191. Residues 125–145 (VGMFASTYMLVLMSIDRCIAI) form a helical membrane-spanning segment. The Cytoplasmic segment spans residues 146–160 (CQPLRSLHKRKDRCY). Residues 161–181 (VIVSWALSLVFSVPQVYIFSL) form a helical membrane-spanning segment. The Extracellular portion of the chain corresponds to 182–206 (REIGNGVYDCWGDFVQPWGAKAYIT). The chain crosses the membrane as a helical span at residues 207–227 (WISLTIYIIPVAILGGCYGLI). Over 228–276 (SFKIWQNFKRKTKKDQCITLTTAASKANALARVSSVKLVSKAKITTVKM) the chain is Cytoplasmic. A helical transmembrane segment spans residues 277–297 (TFVIVLAYIVCWTPFFFVQMW). Residues 298–311 (SAWDPEAPREAMPF) lie on the Extracellular side of the membrane. The chain crosses the membrane as a helical span at residues 312–332 (IISMLLASLNSCCNPWIYMFF). The Cytoplasmic segment spans residues 333–390 (AGHLFHDLKQSLLCCSTLYLKSSQCRCDQEHDSRKSNCSTYVIKSTSSQRSITQSSIT).

This sequence belongs to the G-protein coupled receptor 1 family. Vasopressin/oxytocin receptor subfamily. In terms of tissue distribution, expressed in brain, intestine, bladder, skeletal muscle, lateral line, gills and kidney.

It localises to the cell membrane. In terms of biological role, binds to isotocin. Can also be activated by vasotocin, mesotocin, oxytocin and Arg-vasopressin, although these have lower potencies than isotocin. Produces an induction of membrane chloride currents indicating that it is coupled to the inositol phosphate/calcium pathway. The sequence is that of Isotocin receptor from Catostomus commersonii (White sucker).